Here is a 248-residue protein sequence, read N- to C-terminus: tRNA1(Val) (adenine(37)-N6)-methyltransferase (248 aa).

This sequence belongs to the methyltransferase superfamily. tRNA (adenine-N(6)-)-methyltransferase family.

Its subcellular location is the cytoplasm. It carries out the reaction adenosine(37) in tRNA1(Val) + S-adenosyl-L-methionine = N(6)-methyladenosine(37) in tRNA1(Val) + S-adenosyl-L-homocysteine + H(+). Specifically methylates the adenine in position 37 of tRNA(1)(Val) (anticodon cmo5UAC). In Pectobacterium carotovorum subsp. carotovorum (strain PC1), this protein is tRNA1(Val) (adenine(37)-N6)-methyltransferase.